Consider the following 361-residue polypeptide: Molybdenum import ATP-binding protein ModC (361 aa).

The region spanning 1-235 (MDGLRLRFRR…VDLPLALDDD (235 aa)) is the ABC transporter domain. 33-40 (GHSGSGKS) is an ATP binding site. The region spanning 296–361 (QSSILNRLPV…AQIKSVAVLA (66 aa)) is the Mop domain.

This sequence belongs to the ABC transporter superfamily. Molybdate importer (TC 3.A.1.8) family. In terms of assembly, the complex is composed of two ATP-binding proteins (ModC), two transmembrane proteins (ModB) and a solute-binding protein (ModA).

The protein localises to the cell inner membrane. The catalysed reaction is molybdate(out) + ATP + H2O = molybdate(in) + ADP + phosphate + H(+). Its function is as follows. Part of the ABC transporter complex ModABC involved in molybdenum import. Responsible for energy coupling to the transport system. The sequence is that of Molybdenum import ATP-binding protein ModC from Pseudomonas aeruginosa (strain ATCC 15692 / DSM 22644 / CIP 104116 / JCM 14847 / LMG 12228 / 1C / PRS 101 / PAO1).